Here is a 102-residue protein sequence, read N- to C-terminus: Large ribosomal subunit protein bL21 (102 aa).

The protein belongs to the bacterial ribosomal protein bL21 family. As to quaternary structure, part of the 50S ribosomal subunit. Contacts protein L20.

Functionally, this protein binds to 23S rRNA in the presence of protein L20. This Levilactobacillus brevis (strain ATCC 367 / BCRC 12310 / CIP 105137 / JCM 1170 / LMG 11437 / NCIMB 947 / NCTC 947) (Lactobacillus brevis) protein is Large ribosomal subunit protein bL21.